Here is a 342-residue protein sequence, read N- to C-terminus: Glycerol-1-phosphate dehydrogenase [NAD(P)+] (342 aa).

Residues 84–88 (GRPID) and 106–109 (TSAS) contribute to the NAD(+) site. Residue D111 participates in substrate binding. S115 contacts NAD(+). A substrate-binding site is contributed by D160. Zn(2+) contacts are provided by D160 and H241. H245 lines the substrate pocket. Zn(2+) is bound at residue H260.

This sequence belongs to the glycerol-1-phosphate dehydrogenase family. As to quaternary structure, homodimer. Requires Zn(2+) as cofactor.

It localises to the cytoplasm. The catalysed reaction is sn-glycerol 1-phosphate + NAD(+) = dihydroxyacetone phosphate + NADH + H(+). The enzyme catalyses sn-glycerol 1-phosphate + NADP(+) = dihydroxyacetone phosphate + NADPH + H(+). It participates in membrane lipid metabolism; glycerophospholipid metabolism. Functionally, catalyzes the NAD(P)H-dependent reduction of dihydroxyacetonephosphate (DHAP or glycerone phosphate) to glycerol 1-phosphate (G1P). The G1P thus generated is used as the glycerophosphate backbone of phospholipids in the cellular membranes of Archaea. This is Glycerol-1-phosphate dehydrogenase [NAD(P)+] from Pyrobaculum arsenaticum (strain DSM 13514 / JCM 11321 / PZ6).